A 258-amino-acid polypeptide reads, in one-letter code: Deoxyribose-phosphate aldolase (258 aa).

Asp101 serves as the catalytic Proton donor/acceptor. Lys166 (schiff-base intermediate with acetaldehyde) is an active-site residue. Lys200 functions as the Proton donor/acceptor in the catalytic mechanism.

The protein belongs to the DeoC/FbaB aldolase family. DeoC type 2 subfamily.

It is found in the cytoplasm. It catalyses the reaction 2-deoxy-D-ribose 5-phosphate = D-glyceraldehyde 3-phosphate + acetaldehyde. It participates in carbohydrate degradation; 2-deoxy-D-ribose 1-phosphate degradation; D-glyceraldehyde 3-phosphate and acetaldehyde from 2-deoxy-alpha-D-ribose 1-phosphate: step 2/2. Functionally, catalyzes a reversible aldol reaction between acetaldehyde and D-glyceraldehyde 3-phosphate to generate 2-deoxy-D-ribose 5-phosphate. The sequence is that of Deoxyribose-phosphate aldolase from Haemophilus ducreyi (strain 35000HP / ATCC 700724).